The sequence spans 104 residues: Replication restart protein PriB (104 aa).

The 101-residue stretch at 1-101 (MTNRLVLSGT…LHAEQIDLID (101 aa)) folds into the SSB domain.

It belongs to the PriB family. Homodimer. Interacts with PriA and DnaT. Component of the replication restart primosome. Primosome assembly occurs via a 'hand-off' mechanism. PriA binds to replication forks, subsequently PriB then DnaT bind; DnaT then displaces ssDNA to generate the helicase loading substrate.

In terms of biological role, involved in the restart of stalled replication forks, which reloads the replicative helicase on sites other than the origin of replication; the PriA-PriB pathway is the major replication restart pathway. During primosome assembly it facilitates complex formation between PriA and DnaT on DNA; stabilizes PriA on DNA. Stimulates the DNA unwinding activity of PriA helicase. The sequence is that of Replication restart protein PriB from Enterobacter sp. (strain 638).